Here is a 1132-residue protein sequence, read N- to C-terminus: Phospholipid-transporting ATPase IG (1132 aa).

The Cytoplasmic portion of the chain corresponds to methionine 1–glutamine 66. Residues phenylalanine 67–valine 85 form a helical membrane-spanning segment. Aspartate 86 is a topological domain (extracellular). The helical transmembrane segment at threonine 87–isoleucine 107 threads the bilayer. Residues lysine 108–serine 290 are Cytoplasmic-facing. The chain crosses the membrane as a helical span at residues isoleucine 291–threonine 311. Residues leucine 312 to aspartate 346 are Extracellular-facing. A helical membrane pass occupies residues phenylalanine 347–glutamate 367. Residues methionine 368–tyrosine 879 lie on the Cytoplasmic side of the membrane. Aspartate 412 acts as the 4-aspartylphosphate intermediate in catalysis. Positions 412, 413, and 414 each coordinate ATP. Aspartate 412 contacts Mg(2+). Threonine 414 provides a ligand contact to Mg(2+). Serine 445 carries the post-translational modification Phosphoserine. 9 residues coordinate ATP: glutamate 501, phenylalanine 543, lysine 566, arginine 597, threonine 677, glycine 678, aspartate 679, arginine 792, and lysine 798. Aspartate 819 lines the Mg(2+) pocket. The ATP site is built by asparagine 822 and aspartate 823. Aspartate 823 serves as a coordination point for Mg(2+). Residues phenylalanine 880–phenylalanine 900 traverse the membrane as a helical segment. Residues serine 901–alanine 908 lie on the Extracellular side of the membrane. Residues alanine 909 to leucine 929 form a helical membrane-spanning segment. Residues glutamate 930 to glutamine 955 lie on the Cytoplasmic side of the membrane. The helical transmembrane segment at leucine 956–glycine 976 threads the bilayer. The Extracellular portion of the chain corresponds to threonine 977 to asparagine 995. A helical transmembrane segment spans residues tryptophan 996–leucine 1016. The Cytoplasmic portion of the chain corresponds to aspartate 1017–histidine 1026. The chain crosses the membrane as a helical span at residues phenylalanine 1027–isoleucine 1047. At tryptophan 1048 to threonine 1069 the chain is on the extracellular side. Residues tryptophan 1070 to leucine 1090 traverse the membrane as a helical segment. Residues lysine 1091–leucine 1132 are Cytoplasmic-facing. Phosphoserine occurs at positions 1108, 1116, and 1126. Residues serine 1116–leucine 1121 carry the Di-leucine motif motif.

The protein belongs to the cation transport ATPase (P-type) (TC 3.A.3) family. Type IV subfamily. In terms of assembly, component of a P4-ATPase flippase complex which consists of a catalytic alpha subunit ATP11C and an accessory beta subunit TMEM30A. Requires Mg(2+) as cofactor. In terms of processing, proteolytically cleaved by CASP3, CASP6 and CASP7. Post-translationally, phosphorylated at Ser-1116 likely by PRKCA; this creates a functional di-leucine motif that is sufficient for endocytosis. In terms of tissue distribution, widely expressed.

The protein resides in the cell membrane. It localises to the endoplasmic reticulum membrane. Its subcellular location is the early endosome membrane. It is found in the recycling endosome membrane. The enzyme catalyses ATP + H2O + phospholipidSide 1 = ADP + phosphate + phospholipidSide 2.. It carries out the reaction a 1,2-diacyl-sn-glycero-3-phospho-L-serine(out) + ATP + H2O = a 1,2-diacyl-sn-glycero-3-phospho-L-serine(in) + ADP + phosphate + H(+). It catalyses the reaction a 1,2-diacyl-sn-glycero-3-phosphoethanolamine(out) + ATP + H2O = a 1,2-diacyl-sn-glycero-3-phosphoethanolamine(in) + ADP + phosphate + H(+). The flippase activity is inactivated by caspase-mediated cleavage in apoptotic cells, allowing for PS exposure on the cell surface and engulfment of apoptotic cells by macrophages. The ATPase activity is up-regulated by aminophospholipids PS and PE and down-regulated by Increasing intracellular Ca2+ levels. Functionally, catalytic component of a P4-ATPase flippase complex which catalyzes the hydrolysis of ATP coupled to the transport of aminophospholipids, phosphatidylserines (PS) and phosphatidylethanolamines (PE), from the outer to the inner leaflet of the plasma membrane. Major PS-flippase in immune cell subsets. In erythrocyte plasma membrane, it is required to maintain PS in the inner leaflet preventing its exposure on the surface. This asymmetric distribution is critical for the survival of erythrocytes in circulation since externalized PS is a phagocytic signal for erythrocyte clearance by splenic macrophages. Required for B cell differentiation past the pro-B cell stage. Seems to mediate PS flipping in pro-B cells. May be involved in the transport of cholestatic bile acids. The chain is Phospholipid-transporting ATPase IG from Homo sapiens (Human).